Here is a 388-residue protein sequence, read N- to C-terminus: Phosphopentomutase (388 aa).

Residues Asp10, Asp282, His287, Asp323, His324, and His335 each contribute to the Mn(2+) site.

Belongs to the phosphopentomutase family. The cofactor is Mn(2+).

The protein resides in the cytoplasm. The catalysed reaction is 2-deoxy-alpha-D-ribose 1-phosphate = 2-deoxy-D-ribose 5-phosphate. It catalyses the reaction alpha-D-ribose 1-phosphate = D-ribose 5-phosphate. It participates in carbohydrate degradation; 2-deoxy-D-ribose 1-phosphate degradation; D-glyceraldehyde 3-phosphate and acetaldehyde from 2-deoxy-alpha-D-ribose 1-phosphate: step 1/2. Functionally, isomerase that catalyzes the conversion of deoxy-ribose 1-phosphate (dRib-1-P) and ribose 1-phosphate (Rib-1-P) to deoxy-ribose 5-phosphate (dRib-5-P) and ribose 5-phosphate (Rib-5-P), respectively. The polypeptide is Phosphopentomutase (Carboxydothermus hydrogenoformans (strain ATCC BAA-161 / DSM 6008 / Z-2901)).